A 161-amino-acid polypeptide reads, in one-letter code: ATP synthase subunit b (161 aa).

The helical transmembrane segment at 12–32 (IAFFLFVFFCMKYIWPNLISL) threads the bilayer.

It belongs to the ATPase B chain family. F-type ATPases have 2 components, F(1) - the catalytic core - and F(0) - the membrane proton channel. F(1) has five subunits: alpha(3), beta(3), gamma(1), delta(1), epsilon(1). F(0) has three main subunits: a(1), b(2) and c(10-14). The alpha and beta chains form an alternating ring which encloses part of the gamma chain. F(1) is attached to F(0) by a central stalk formed by the gamma and epsilon chains, while a peripheral stalk is formed by the delta and b chains.

It is found in the cell membrane. In terms of biological role, f(1)F(0) ATP synthase produces ATP from ADP in the presence of a proton or sodium gradient. F-type ATPases consist of two structural domains, F(1) containing the extramembraneous catalytic core and F(0) containing the membrane proton channel, linked together by a central stalk and a peripheral stalk. During catalysis, ATP synthesis in the catalytic domain of F(1) is coupled via a rotary mechanism of the central stalk subunits to proton translocation. Functionally, component of the F(0) channel, it forms part of the peripheral stalk, linking F(1) to F(0). The protein is ATP synthase subunit b of Wigglesworthia glossinidia brevipalpis.